A 365-amino-acid chain; its full sequence is 2-aminoethylphosphonate--pyruvate transaminase (365 aa).

Position 194 is an N6-(pyridoxal phosphate)lysine (K194).

This sequence belongs to the class-V pyridoxal-phosphate-dependent aminotransferase family. PhnW subfamily. As to quaternary structure, homodimer. It depends on pyridoxal 5'-phosphate as a cofactor.

It catalyses the reaction (2-aminoethyl)phosphonate + pyruvate = phosphonoacetaldehyde + L-alanine. In terms of biological role, involved in phosphonate degradation. The chain is 2-aminoethylphosphonate--pyruvate transaminase from Bacillus cereus (strain AH187).